Here is a 478-residue protein sequence, read N- to C-terminus: Putrescine oxidase (478 aa).

15 to 70 (RDVVVVGAGPAGLMAARTLVAAGRTVAVLEARDRVGGRTWSKTVDGAFLEIGGQWI) contacts FAD.

It belongs to the flavin monoamine oxidase family. Requires FAD as cofactor.

It carries out the reaction putrescine + O2 + H2O = 4-aminobutanal + H2O2 + NH4(+). The protein is Putrescine oxidase (puo) of Kocuria rosea (Deinococcus erythromyxa).